Consider the following 176-residue polypeptide: Transcription factor E (176 aa).

The HTH TFE/IIEalpha-type domain maps to 8–90 (EDPVIQKYLH…LWTFQYEKIP (83 aa)).

This sequence belongs to the TFE family. As to quaternary structure, monomer. Interaction with RNA polymerase subunits RpoF and RpoE is necessary for Tfe stimulatory transcription activity. Able to interact with Tbp and RNA polymerase in the absence of DNA promoter. Interacts both with the preinitiation and elongation complexes.

Its function is as follows. Transcription factor that plays a role in the activation of archaeal genes transcribed by RNA polymerase. Facilitates transcription initiation by enhancing TATA-box recognition by TATA-box-binding protein (Tbp), and transcription factor B (Tfb) and RNA polymerase recruitment. Not absolutely required for transcription in vitro, but particularly important in cases where Tbp or Tfb function is not optimal. It dynamically alters the nucleic acid-binding properties of RNA polymerases by stabilizing the initiation complex and destabilizing elongation complexes. Seems to translocate with the RNA polymerase following initiation and acts by binding to the non template strand of the transcription bubble in elongation complexes. This is Transcription factor E from Haloarcula marismortui (strain ATCC 43049 / DSM 3752 / JCM 8966 / VKM B-1809) (Halobacterium marismortui).